We begin with the raw amino-acid sequence, 387 residues long: VFHGGVAGLKQQVEATVNLLTTDGRTPQKQLDDIRLHLHPQLKKQNTEFQEVLQPLLRQQGICILDYIELNQQQRNYLDNYFQEQIFPVLTPLAVDPSHPFPHISNLSLNLAVVVKNPDTEEEFFARVKVPQVLPRFLPLPPELRTEDNGKTANWSGIPLEQAIAHNLESLFPGMSIQEYHPFRITRDADLELEEDEAEDLLLAIEQELRKRGMGGTPVRLEIRSQTPESIRSRLLQDLGLTENDIYEVDGLLGLRDLMYFLLLPLPDLKDPPRQSVVPSRLQRLKEPCINPDVPEPEDGKDFFSVIREKDLLVHHPYQSFSGTVVRFITSAAHDPNVLAMKMTLYRTSGDSPIVNALIAAAENGKQVSVLVELKARFDEENNIYWA.

The Mg(2+) site is built by arginine 347 and arginine 377.

The protein belongs to the polyphosphate kinase 1 (PPK1) family. The cofactor is Mg(2+). Post-translationally, an intermediate of this reaction is the autophosphorylated ppk in which a phosphate is covalently linked to a histidine residue through a N-P bond.

It carries out the reaction [phosphate](n) + ATP = [phosphate](n+1) + ADP. Catalyzes the reversible transfer of the terminal phosphate of ATP to form a long-chain polyphosphate (polyP). The chain is Polyphosphate kinase (ppk) from Aphanizomenon baltica.